Consider the following 299-residue polypeptide: Zinc finger protein 414 (299 aa).

Polar residues-rich tracts occupy residues 1–20 (MEEP…SSSG) and 69–81 (DSCQ…TGVG). A disordered region spans residues 1–98 (MEEPSRPSSD…PRRRPPPGKQ (98 aa)). 2 C2H2-type zinc fingers span residues 99 to 123 (IPCS…LRTH) and 135 to 159 (FRCS…GKLH). Residues 166–190 (FKCENCLLRFRTHRSLFKHLHVCID) form a C2H2-type 3; degenerate zinc finger. Disordered regions lie at residues 193–228 (QNPA…PFPL) and 254–299 (PRLR…GACR). Residues 203–215 (LDKEPPVPERPPE) are compositionally biased toward basic and acidic residues. The span at 217 to 228 (DPSSSLGLPFPL) shows a compositional bias: low complexity.

This sequence belongs to the krueppel C2H2-type zinc-finger protein family.

The protein resides in the nucleus. May be involved in transcriptional regulation. The polypeptide is Zinc finger protein 414 (Znf414) (Mus musculus (Mouse)).